Reading from the N-terminus, the 448-residue chain is Glutamate--tRNA ligase 2 (448 aa).

Positions 9–19 (PSPTGKLHIGN) match the 'HIGH' region motif. Positions 240–244 (KISKR) match the 'KMSKS' region motif. Residue lysine 243 participates in ATP binding.

This sequence belongs to the class-I aminoacyl-tRNA synthetase family. Glutamate--tRNA ligase type 1 subfamily. As to quaternary structure, monomer.

It localises to the cytoplasm. The catalysed reaction is tRNA(Glu) + L-glutamate + ATP = L-glutamyl-tRNA(Glu) + AMP + diphosphate. Catalyzes the attachment of glutamate to tRNA(Glu) in a two-step reaction: glutamate is first activated by ATP to form Glu-AMP and then transferred to the acceptor end of tRNA(Glu). In Orientia tsutsugamushi (strain Boryong) (Rickettsia tsutsugamushi), this protein is Glutamate--tRNA ligase 2.